A 200-amino-acid chain; its full sequence is MSGFKQHTGLVVPLDTANIDTDAIIPKQFLQKVNRIGFGKHLFHDWRFLDDAGEQPNPEFVMNAPRYQGATVLLARENFGCGSSREHAPWALADYGIQVMIAPSFADIFYGNSINNQMVPVRLTESEVDEIFQFVEANEGAEVTVDLEVMLVTANNKQYSFEIDEFRRHCLLNGLDNIGLTLQHADKISEYEAKIPSFLK.

This sequence belongs to the LeuD family. LeuD type 1 subfamily. In terms of assembly, heterodimer of LeuC and LeuD.

The enzyme catalyses (2R,3S)-3-isopropylmalate = (2S)-2-isopropylmalate. The protein operates within amino-acid biosynthesis; L-leucine biosynthesis; L-leucine from 3-methyl-2-oxobutanoate: step 2/4. In terms of biological role, catalyzes the isomerization between 2-isopropylmalate and 3-isopropylmalate, via the formation of 2-isopropylmaleate. This is 3-isopropylmalate dehydratase small subunit from Aliivibrio fischeri (strain MJ11) (Vibrio fischeri).